We begin with the raw amino-acid sequence, 359 residues long: DNA replication and repair protein RecF (359 aa).

30 to 37 (GPNGSGKT) contacts ATP.

The protein belongs to the RecF family.

It localises to the cytoplasm. In terms of biological role, the RecF protein is involved in DNA metabolism; it is required for DNA replication and normal SOS inducibility. RecF binds preferentially to single-stranded, linear DNA. It also seems to bind ATP. The polypeptide is DNA replication and repair protein RecF (Aliivibrio salmonicida (strain LFI1238) (Vibrio salmonicida (strain LFI1238))).